The following is a 209-amino-acid chain: Uracil phosphoribosyltransferase (209 aa).

Residues Arg79, Arg104, and 131-139 (DPMLATGNS) each bind 5-phospho-alpha-D-ribose 1-diphosphate. Residues Ile194 and 199–201 (GDA) each bind uracil. A 5-phospho-alpha-D-ribose 1-diphosphate-binding site is contributed by Asp200.

This sequence belongs to the UPRTase family. It depends on Mg(2+) as a cofactor.

It catalyses the reaction UMP + diphosphate = 5-phospho-alpha-D-ribose 1-diphosphate + uracil. The protein operates within pyrimidine metabolism; UMP biosynthesis via salvage pathway; UMP from uracil: step 1/1. Allosterically activated by GTP. Catalyzes the conversion of uracil and 5-phospho-alpha-D-ribose 1-diphosphate (PRPP) to UMP and diphosphate. The protein is Uracil phosphoribosyltransferase of Rhodococcus jostii (strain RHA1).